We begin with the raw amino-acid sequence, 506 residues long: Hexokinase-6 (506 aa).

A helical membrane pass occupies residues 6–26 (VVGTAVVVCAAAAAAVGVAVV). The Hexokinase domain occupies 43–497 (RRAAAVIEEV…SGIGAALLAA (455 aa)). A hexokinase small subdomain region spans residues 98-236 (TGDEHGLFYA…GLDMKVTALV (139 aa)). Residues glycine 112, threonine 113, and asparagine 114 each coordinate ADP. D-glucose-binding residues include threonine 202, lysine 203, asparagine 237, and aspartate 238. Residues 237 to 486 (NDTVGTLAGG…SSVVVKLAND (250 aa)) form a hexokinase large subdomain region. An ADP-binding site is contributed by threonine 261. Residues asparagine 264, glutamate 292, and glutamate 323 each contribute to the D-glucose site. ADP is bound at residue glycine 451.

This sequence belongs to the hexokinase family. As to expression, expressed in roots, leaves, flowers, immature seeds and endosperm.

The protein localises to the plastid. It is found in the chloroplast outer membrane. The catalysed reaction is a D-hexose + ATP = a D-hexose 6-phosphate + ADP + H(+). It carries out the reaction D-fructose + ATP = D-fructose 6-phosphate + ADP + H(+). The enzyme catalyses D-glucose + ATP = D-glucose 6-phosphate + ADP + H(+). It participates in carbohydrate metabolism; hexose metabolism. The protein operates within carbohydrate degradation; glycolysis; D-glyceraldehyde 3-phosphate and glycerone phosphate from D-glucose: step 1/4. Functionally, fructose and glucose phosphorylating enzyme. Functions as a glucose sensor for plant growth and photosynthesis. The polypeptide is Hexokinase-6 (HXK6) (Oryza sativa subsp. japonica (Rice)).